A 606-amino-acid chain; its full sequence is Protein couch potato (606 aa).

Residues 81–105 (IKRRPTLPQTPASAPQVLSPSPKRQ) carry the Nuclear localization signal motif. Tandem repeats lie at residues 91 to 95 (PASAP), 109 to 113 (AVSVL), 114 to 118 (PVTVP), 122 to 126 (PVSVP), 128 to 132 (PVSVP), 134 to 138 (PVSVK), and 159 to 163 (PISHP). The tract at residues 91 to 164 (PASAPQVLSP…SHSHPISHPH (74 aa)) is 7 X 5 AA approximate repeats of P-V-S-V-P. 4 disordered regions span residues 147-166 (QIAHTHQISHSHPISHPHHH), 282-311 (QQQQHILLSSGSSSSKHNSNNNSNTSAGAA), 324-365 (VPTT…TSAA), and 388-410 (PATSAVSDSNNNLNSSSSSNSNS). Residues 344–365 (SNSATASAPTTPSPAGSVTSAA) are compositionally biased toward low complexity. The RRM domain occupies 442-524 (RTLFVSGLPM…QTIRLEFAKS (83 aa)).

As to expression, expressed in neural precursors and their daughter cells in the embryonic peripheral nervous system. Less abundant in a number of glial cells in the peripheral and central nervous systems and also present at low levels in the developing gut.

Its subcellular location is the nucleus. May play a role in the development or function of the peripheral nervous system by regulating the processing of nervous system-specific transcripts. The polypeptide is Protein couch potato (cpo) (Drosophila melanogaster (Fruit fly)).